The sequence spans 340 residues: Eukaryotic translation initiation factor 3 subunit I (340 aa).

WD repeat units follow at residues 8 to 47 (GHER…RLGT), 50 to 91 (GHQG…KVWD), 150 to 189 (CTES…QLEN), 194 to 233 (EFDH…ILKT), and 291 to 330 (GHFG…FDFM).

The protein belongs to the eIF-3 subunit I family. Component of the eukaryotic translation initiation factor 3 (eIF-3) complex.

It is found in the cytoplasm. Component of the eukaryotic translation initiation factor 3 (eIF-3) complex, which is involved in protein synthesis of a specialized repertoire of mRNAs and, together with other initiation factors, stimulates binding of mRNA and methionyl-tRNAi to the 40S ribosome. The eIF-3 complex specifically targets and initiates translation of a subset of mRNAs involved in cell proliferation. This chain is Eukaryotic translation initiation factor 3 subunit I (tif34), found in Aspergillus fumigatus (strain CBS 144.89 / FGSC A1163 / CEA10) (Neosartorya fumigata).